The primary structure comprises 53 residues: Conotoxin Bu27 (53 aa).

A propeptide spanning residues 1 to 12 is cleaved from the precursor; sequence ASDGRNAVVHER. At P14 the chain carries 4-hydroxyproline. E15 bears the 4-carboxyglutamate mark. 2 O-linked (HexNAc...) threonine glycosylation sites follow: T19 and T21. 4-hydroxyproline occurs at positions 29, 34, 35, 43, 44, and 48. Residue P48 is modified to Proline amide. Residues 49 to 53 constitute a propeptide that is removed on maturation; sequence GRRND.

The protein belongs to the conotoxin A superfamily. In terms of processing, contains 3 disulfide bonds. In terms of tissue distribution, expressed by the venom duct.

The protein localises to the secreted. Its function is as follows. Probable neurotoxin with ion channel inhibitor activity. This chain is Conotoxin Bu27, found in Conus bullatus (Bubble cone).